Consider the following 108-residue polypeptide: VQ motif-containing protein 10 (108 aa).

The short motif at 29–38 (FKTVVQELTG) is the VQ element. The interval 65-85 (IGEDTRQLHGGGGGGGRMGTT) is disordered. The span at 73–82 (HGGGGGGGRM) shows a compositional bias: gly residues.

In terms of assembly, interacts with WRKY25, WRKY26 and WRKY33.

It is found in the nucleus. Its function is as follows. May modulate WRKY transcription factor activities. The polypeptide is VQ motif-containing protein 10 (Arabidopsis thaliana (Mouse-ear cress)).